Consider the following 249-residue polypeptide: MSVEASRTCFLIDSLLNKKPKEELETEEEDEEEDEEEELSSSEVTSENDMETESASSSASSVGQPKPDFSAFHKIFSNLDFAKLAAVKRNGHHQPMLFRPECFFPLELSKHLHLVQQTFQMNVLQNLGHTLPLPFVPMLKNVAPAQKRLNNKRASYVDHSQKGNLKKYRCDVCDKTFSRSNTLITHKRIHTGEKPFKCEHCGRAFRQPGNLTRHRLTHTTVKPYVCGLCDKAFNRASNLHTHMRTHTNV.

The interval 20-65 (PKEELETEEEDEEEDEEEELSSSEVTSENDMETESASSSASSVGQP) is disordered. Residues 24–52 (LETEEEDEEEDEEEELSSSEVTSENDMET) show a composition bias toward acidic residues. 3 C2H2-type zinc fingers span residues 168-190 (YRCDVCDKTFSRSNTLITHKRIH), 196-218 (FKCEHCGRAFRQPGNLTRHRLTH), and 224-246 (YVCGLCDKAFNRASNLHTHMRTH).

In terms of tissue distribution, in larva and adult, expressed in the M3 pharyngeal motor neurons, extrapharyngeal neurons in the head, the PQR tail neurons, rectal cells, vulva cells, the spermetheca-uterine valve, body wall muscle cells and neurons of the ventral nerve cord. In the embryo, expressed in pharyngeal cells, extrapharyngeal head neurons and within the tail. Expressed in body wall muscle cells during late embryonic stages. Expressed in the mother cells of the M2 and M3 pharyngeal motor neurons precursor cells at the embryonic bean stage and subsequently in the M2 and M3 cells as they are born. Expression is sustained only in the two M3 cells up to at least the 5-day-old adult. In contrast, expression gradually declines in the M2 cells beginning from the time of their birth, and is completely undetectable by the time of hatching.

It localises to the nucleus. In terms of biological role, required in the M3 pharyngeal motor neuron to guide the growth cone of the sister M2 motor neuron during axon development. The protein is Zinc finger protein mnm-2 of Caenorhabditis elegans.